The sequence spans 314 residues: Basic endochitinase (314 aa).

Positions 1–20 (MGLWALVAFCLLSLILVGSA) are cleaved as a signal peptide. The 41-residue stretch at 21–61 (EQCGGQAGGRVCPGGACCSKFGWCGNTADYCGSGCQSQCSS) folds into the Chitin-binding type-1 domain. 7 disulfide bridges follow: cysteine 23–cysteine 38, cysteine 32–cysteine 44, cysteine 37–cysteine 51, cysteine 55–cysteine 59, cysteine 86–cysteine 148, cysteine 160–cysteine 168, and cysteine 267–cysteine 299. The Proton donor role is filled by glutamate 130.

This sequence belongs to the glycosyl hydrolase 19 family. Chitinase class I subfamily.

It catalyses the reaction Random endo-hydrolysis of N-acetyl-beta-D-glucosaminide (1-&gt;4)-beta-linkages in chitin and chitodextrins.. Defense against chitin-containing fungal pathogens. The polypeptide is Basic endochitinase (CHIT1B) (Vitis vinifera (Grape)).